Here is a 286-residue protein sequence, read N- to C-terminus: MALSRLLSTLKSKVLYDDLSEESQKRVDNKNRKSLALSKRPLNQGRVTIDQAATMLGLEPFSFSDVKVNKYDMFIAKQDYSVKAHRKATFNILVDPYWFHQPLTHYPFFRVETFAMVWIGIKGRASGITTLRIIDKSYVNPSDQVEVEVRYPISKNFAVLGSLANFLALEDKHNLQVSVSVDDSSVQNCVISRTLWFWGIERTDLPVSMKTNDTVMFEFEPLEDKAINHLSSFSNFTTNVVQKAVGGAFTSKSFPELDTEKEFGVVKQPKKIPITKKSKSEVSVIM.

This sequence belongs to the tenuiviruses pc4 protein family. Interacts with the rice proteins DJA6 and HSP17.9A.

The protein localises to the host cytoplasm. Transports viral genome to neighboring plant cells directly through plasmosdesmata, without any budding. The movement protein allows efficient cell to cell propagation, by bypassing the host cell wall barrier. The chain is Movement protein from Avena sativa (Oat).